The primary structure comprises 198 residues: Pyridoxal 5'-phosphate synthase subunit PdxT (198 aa).

49–51 (GES) contributes to the L-glutamine binding site. Residue Cys81 is the Nucleophile of the active site. L-glutamine-binding positions include Arg112 and 140 to 141 (IR). Active-site charge relay system residues include His176 and Glu178.

Belongs to the glutaminase PdxT/SNO family. As to quaternary structure, in the presence of PdxS, forms a dodecamer of heterodimers. Only shows activity in the heterodimer.

The enzyme catalyses aldehydo-D-ribose 5-phosphate + D-glyceraldehyde 3-phosphate + L-glutamine = pyridoxal 5'-phosphate + L-glutamate + phosphate + 3 H2O + H(+). It carries out the reaction L-glutamine + H2O = L-glutamate + NH4(+). The protein operates within cofactor biosynthesis; pyridoxal 5'-phosphate biosynthesis. In terms of biological role, catalyzes the hydrolysis of glutamine to glutamate and ammonia as part of the biosynthesis of pyridoxal 5'-phosphate. The resulting ammonia molecule is channeled to the active site of PdxS. The sequence is that of Pyridoxal 5'-phosphate synthase subunit PdxT from Methanocella arvoryzae (strain DSM 22066 / NBRC 105507 / MRE50).